We begin with the raw amino-acid sequence, 117 residues long: Urease subunit beta (117 aa).

The segment at 95–117 (NAVNGKLDGGPHPGVPATERGAK) is disordered.

This sequence belongs to the urease beta subunit family. In terms of assembly, heterotrimer of UreA (gamma), UreB (beta) and UreC (alpha) subunits. Three heterotrimers associate to form the active enzyme.

It localises to the cytoplasm. The enzyme catalyses urea + 2 H2O + H(+) = hydrogencarbonate + 2 NH4(+). It participates in nitrogen metabolism; urea degradation; CO(2) and NH(3) from urea (urease route): step 1/1. The chain is Urease subunit beta from Pseudarthrobacter chlorophenolicus (strain ATCC 700700 / DSM 12829 / CIP 107037 / JCM 12360 / KCTC 9906 / NCIMB 13794 / A6) (Arthrobacter chlorophenolicus).